We begin with the raw amino-acid sequence, 310 residues long: Malate dehydrogenase (310 aa).

NAD(+) contacts are provided by residues 7–12 (GAGNVG) and aspartate 32. Substrate-binding residues include arginine 81 and arginine 87. Residues asparagine 94 and 117–119 (VSN) each bind NAD(+). Substrate contacts are provided by asparagine 119 and arginine 150. Residue histidine 174 is the Proton acceptor of the active site.

Belongs to the LDH/MDH superfamily. MDH type 3 family. In terms of assembly, homotetramer; arranged as a dimer of dimers.

It carries out the reaction (S)-malate + NAD(+) = oxaloacetate + NADH + H(+). Its function is as follows. Catalyzes the reversible oxidation of malate to oxaloacetate. The sequence is that of Malate dehydrogenase from Chlorobaculum tepidum (strain ATCC 49652 / DSM 12025 / NBRC 103806 / TLS) (Chlorobium tepidum).